The primary structure comprises 348 residues: Mannonate dehydratase (348 aa).

It belongs to the mannonate dehydratase family. It depends on Fe(2+) as a cofactor. Mn(2+) serves as cofactor.

It carries out the reaction D-mannonate = 2-dehydro-3-deoxy-D-gluconate + H2O. Its pathway is carbohydrate metabolism; pentose and glucuronate interconversion. Functionally, catalyzes the dehydration of D-mannonate. The polypeptide is Mannonate dehydratase (Streptococcus uberis (strain ATCC BAA-854 / 0140J)).